Reading from the N-terminus, the 278-residue chain is Pantothenate synthetase (278 aa).

Residue 27-34 (MGYLHEGH) coordinates ATP. Catalysis depends on His-34, which acts as the Proton donor. Gln-58 provides a ligand contact to (R)-pantoate. Gln-58 lines the beta-alanine pocket. Residue 144–147 (GQKD) coordinates ATP. Gln-150 lines the (R)-pantoate pocket. Residues Val-173 and 181 to 184 (MSSR) each bind ATP.

The protein belongs to the pantothenate synthetase family. As to quaternary structure, homodimer.

The protein localises to the cytoplasm. It catalyses the reaction (R)-pantoate + beta-alanine + ATP = (R)-pantothenate + AMP + diphosphate + H(+). It participates in cofactor biosynthesis; (R)-pantothenate biosynthesis; (R)-pantothenate from (R)-pantoate and beta-alanine: step 1/1. Its function is as follows. Catalyzes the condensation of pantoate with beta-alanine in an ATP-dependent reaction via a pantoyl-adenylate intermediate. In Roseiflexus sp. (strain RS-1), this protein is Pantothenate synthetase.